The following is a 303-amino-acid chain: Aquaporin NIP1-2 (303 aa).

Residues 1–39 (MAGREDGAAAGAMEEGQDSKEVKCESSEDGSSSSSSSRC) form a disordered region. A compositionally biased stretch (basic and acidic residues) spans 17–26 (QDSKEVKCES). 2 helical membrane passes run 66–86 (ILAE…AVVV) and 91–111 (GGAV…MVLV). An NPA 1 motif is present at residues 123-125 (NPA). 3 helical membrane-spanning segments follow: residues 145 to 165 (VVAQ…VFGG), 188 to 208 (AAAL…GVAT), and 212 to 232 (AIGE…VLFA). The short motif at 241–243 (NPA) is the NPA 2 element. A helical transmembrane segment spans residues 255 to 275 (YGGVWVYVAAPVSGTVCGAWA).

This sequence belongs to the MIP/aquaporin (TC 1.A.8) family. NIP (TC 1.A.8.12) subfamily. In terms of tissue distribution, expressed in roots and leaves, and at lower levels in anthers.

It localises to the membrane. Aquaporins facilitate the transport of water and small neutral solutes across cell membranes. The chain is Aquaporin NIP1-2 (NIP1-2) from Oryza sativa subsp. japonica (Rice).